Consider the following 88-residue polypeptide: MSKNLFMDLSSISEKEKGSVEFQIFRLTNRVVKLTYHFKKHGKDYSSQRGLWKILGKRKRLLAYLFKTNFVSYENLIIQLGIRGLKKN.

Belongs to the universal ribosomal protein uS15 family. Part of the 30S ribosomal subunit.

It is found in the plastid. It localises to the chloroplast. This Marchantia polymorpha (Common liverwort) protein is Small ribosomal subunit protein uS15c (rps15).